Reading from the N-terminus, the 502-residue chain is UPF0371 protein CLL_A2797 (502 aa).

It belongs to the UPF0371 family.

This chain is UPF0371 protein CLL_A2797, found in Clostridium botulinum (strain Eklund 17B / Type B).